Consider the following 41-residue polypeptide: MKVRNSLKSLRARHRDNRLVRRKGRVYVINKTQRRFKARQG.

Belongs to the bacterial ribosomal protein bL36 family.

This Nitrobacter hamburgensis (strain DSM 10229 / NCIMB 13809 / X14) protein is Large ribosomal subunit protein bL36.